An 892-amino-acid chain; its full sequence is MAFFSSSSSSFPVVFARMEEASSSTGSTGGAMAGIPVIPSTSAALLANTNLEPERIAVLQTQLQEYRQKQMDLIGHFQRAQQELSVQHMHNLYTALQQQQQLQSLQERSGINPMLISQTSEDATSGPAAPLSLANSLTNLLSSSNGNLSNLSVPQTPTKEHHPTLPPQQPSAPTSSRKSDLPRTNSTTISQLTKDRLKNMIANRSKGESNSQSNLMSNVNGHDNSRRLKNSNSQMNVSSPHFEPYRLPTSLANAHNLQQASEFQLRKVNSEPNLKMKIRAKLLSKGNSPVQHVQQTNNSQFSFTHPQLKRSDSETSNMPIDMLPSGSHSNIPHLMLPSPSLPNLAAATGAFQNLNLPIGQDLTAFMAVANLSPFLSLPSLLNKKLELGGMTDEGDRNGFSSSASNSSLASNASLGSHQYQSLLKQQIRDLVLRRKSLVREDPEGEGMAESYNGLFSHAKLQQLTALAMESGFNPKLEPTFSTGLGYDPLMARHECVCSNNSNHVENGERIQRIWSKLTEEGHVAKCERITAKKASLEQLQMVHSQTYTTFFAVSPTACLKIDANALPLKRFLQLPCGGIGIDSDTYFNDASTQIAARLAAGTLIELSSQVAEGRLKNGFACIRPPGHHAEAEQALGFCFFNNVAVTAKVLQAKYPVQCAKIAIIDWDVHHGNGTQLSFDDDPNVLYMSLHRHDNGNFFPGTGSVTEIGKGAGKGFSVNIPFSGGVMKDAEYLAAWRTVVEPVLASFCPDFILVSAGFDACHGHVNALGGYEITPEMFGYMTKCLLSYANGKVVLALEGGYNLDSISAAAEQCVQALIGESDDAGRLCTDSLENLPNQSALETLQKVIAIHKGFWPALHGQEAAINTTEMQWRNVKLQVQMQQQQQLQQQLQQ.

Residues 145–225 form a disordered region; the sequence is NGNLSNLSVP…MSNVNGHDNS (81 aa). Composition is skewed to polar residues over residues 171–192 and 208–222; these read SAPT…ISQL and ESNS…VNGH. A histone deacetylase region spans residues 481-822; the sequence is STGLGYDPLM…VQALIGESDD (342 aa). Residue His628 is part of the active site.

This sequence belongs to the histone deacetylase family. HD type 2 subfamily.

The protein localises to the nucleus. It carries out the reaction N(6)-acetyl-L-lysyl-[histone] + H2O = L-lysyl-[histone] + acetate. Functionally, responsible for the deacetylation of lysine residues on the N-terminal part of the core histones (H2A, H2B, H3 and H4). Histone deacetylation gives a tag for epigenetic repression and plays an important role in transcriptional regulation, cell cycle progression and developmental events. Histone deacetylases act via the formation of large multiprotein complexes. This is Histone deacetylase 4 (hda-4) from Caenorhabditis briggsae.